Consider the following 106-residue polypeptide: Small ribosomal subunit protein uS10 (106 aa).

Belongs to the universal ribosomal protein uS10 family. In terms of assembly, part of the 30S ribosomal subunit.

In terms of biological role, involved in the binding of tRNA to the ribosomes. The protein is Small ribosomal subunit protein uS10 of Mycoplasma genitalium (strain ATCC 33530 / DSM 19775 / NCTC 10195 / G37) (Mycoplasmoides genitalium).